A 258-amino-acid chain; its full sequence is Aspartate/glutamate leucyltransferase (258 aa).

It belongs to the R-transferase family. Bpt subfamily.

It localises to the cytoplasm. The enzyme catalyses N-terminal L-glutamyl-[protein] + L-leucyl-tRNA(Leu) = N-terminal L-leucyl-L-glutamyl-[protein] + tRNA(Leu) + H(+). It carries out the reaction N-terminal L-aspartyl-[protein] + L-leucyl-tRNA(Leu) = N-terminal L-leucyl-L-aspartyl-[protein] + tRNA(Leu) + H(+). Functions in the N-end rule pathway of protein degradation where it conjugates Leu from its aminoacyl-tRNA to the N-termini of proteins containing an N-terminal aspartate or glutamate. This Bradyrhizobium diazoefficiens (strain JCM 10833 / BCRC 13528 / IAM 13628 / NBRC 14792 / USDA 110) protein is Aspartate/glutamate leucyltransferase.